The chain runs to 156 residues: ATP synthase subunit b (156 aa).

A helical transmembrane segment spans residues 5-25; sequence LTMIGQAIAFFIFVVFCMKYV.

The protein belongs to the ATPase B chain family. As to quaternary structure, F-type ATPases have 2 components, F(1) - the catalytic core - and F(0) - the membrane proton channel. F(1) has five subunits: alpha(3), beta(3), gamma(1), delta(1), epsilon(1). F(0) has three main subunits: a(1), b(2) and c(10-14). The alpha and beta chains form an alternating ring which encloses part of the gamma chain. F(1) is attached to F(0) by a central stalk formed by the gamma and epsilon chains, while a peripheral stalk is formed by the delta and b chains.

Its subcellular location is the cell inner membrane. F(1)F(0) ATP synthase produces ATP from ADP in the presence of a proton or sodium gradient. F-type ATPases consist of two structural domains, F(1) containing the extramembraneous catalytic core and F(0) containing the membrane proton channel, linked together by a central stalk and a peripheral stalk. During catalysis, ATP synthesis in the catalytic domain of F(1) is coupled via a rotary mechanism of the central stalk subunits to proton translocation. In terms of biological role, component of the F(0) channel, it forms part of the peripheral stalk, linking F(1) to F(0). The sequence is that of ATP synthase subunit b from Hahella chejuensis (strain KCTC 2396).